We begin with the raw amino-acid sequence, 381 residues long: Malonyl-CoA-acyl carrier protein transacylase, mitochondrial (381 aa).

Active-site residues include Ser-151 and His-268. N6-succinyllysine is present on Lys-312.

The protein belongs to the type II malonyltransferase family. In terms of tissue distribution, expressed in retinal ganglion cells.

The protein resides in the mitochondrion. The enzyme catalyses holo-[ACP] + malonyl-CoA = malonyl-[ACP] + CoA. It functions in the pathway lipid metabolism; fatty acid biosynthesis. In terms of biological role, catalyzes the transfer of a malonyl moiety from malonyl-CoA to the free thiol group of the phosphopantetheine arm of the mitochondrial ACP protein (NDUFAB1). This suggests the existence of the biosynthesis of fatty acids in mitochondria. This Mus musculus (Mouse) protein is Malonyl-CoA-acyl carrier protein transacylase, mitochondrial.